Consider the following 265-residue polypeptide: Beta-lactamase SHV-4 (265 aa).

Ser-45 acts as the Acyl-ester intermediate in catalysis. Cys-52 and Cys-98 are oxidised to a cystine. Glu-143 (proton acceptor) is an active-site residue. 209 to 211 lines the substrate pocket; it reads KTG.

Belongs to the class-A beta-lactamase family.

The enzyme catalyses a beta-lactam + H2O = a substituted beta-amino acid. Functionally, SHV enzymes hydrolyze broad spectrum cephalosporins notably cefotaxime and ceftazidime. SHV-4 causes particularly high levels of resistance to aztreonam and ceftazidime. In Klebsiella pneumoniae, this protein is Beta-lactamase SHV-4 (bla).